The primary structure comprises 222 residues: Probable fructose-6-phosphate aldolase (222 aa).

Residue lysine 87 is the Schiff-base intermediate with substrate of the active site.

This sequence belongs to the transaldolase family. Type 3A subfamily.

Its subcellular location is the cytoplasm. The catalysed reaction is beta-D-fructose 6-phosphate = dihydroxyacetone + D-glyceraldehyde 3-phosphate. In terms of biological role, catalyzes the reversible formation of fructose 6-phosphate from dihydroxyacetone and D-glyceraldehyde 3-phosphate via an aldolization reaction. The chain is Probable fructose-6-phosphate aldolase from Streptococcus pneumoniae (strain ATCC 700669 / Spain 23F-1).